Here is a 68-residue protein sequence, read N- to C-terminus: DNA-directed RNA polymerase subunit Rpo10 (68 aa).

Cys7, Cys10, Cys44, and Cys45 together coordinate Zn(2+).

The protein belongs to the archaeal Rpo10/eukaryotic RPB10 RNA polymerase subunit family. As to quaternary structure, part of the RNA polymerase complex. Requires Zn(2+) as cofactor.

The protein resides in the cytoplasm. It carries out the reaction RNA(n) + a ribonucleoside 5'-triphosphate = RNA(n+1) + diphosphate. DNA-dependent RNA polymerase (RNAP) catalyzes the transcription of DNA into RNA using the four ribonucleoside triphosphates as substrates. This Methanococcus maripaludis (strain C5 / ATCC BAA-1333) protein is DNA-directed RNA polymerase subunit Rpo10.